Reading from the N-terminus, the 872-residue chain is MSRFFRGGDDSSTDSSSEEEEVYTSEEEEEKVQAEDESSSEEESDEEESDEESSSDEEEGTKKKGASRFLQSDDESEEEEEEQSDDEATTKVKSAKDKRFDELESTISQIQNGQKINDWSLIANEFDKLNRQVVKLQDGSKAPKSYIKAIADLEDFMNETLAKQKVTPKKMNATNARGLNAVKQRIRKNNKEYQTQIDAYRKDADAFMESDDEVAAPKVVSKVRFEAPVVSAEQQEEDDKGFSTVDSRGKVVQYTPESILKHLRAIIESRGKKNTDRLEQIKVMETLNKVVPITPYQKIRVLQTLISARFDLGAGGAAQMPLDQWKAAERDLASLLEILEKEKDHVVVEGAEEWDDDDKLPTIPEGEKYLKVPGSVVSLIERLDDELTRSLQAIDPHTSEYIDRLTDEGSLYNTIFRGLLYYEHLRKDASLEVPQESLNRIIQRRLDHVYYKPAQVVKILEENAWKQVSAEADSEITPRSQSGDAGKLINILSNYLFENSEGIIRARAMLCQIYFLALHDEYYKSRDLMLTSHLQETIANFDIATQILYNRTLVQVGLCAFRKGLVYDAQNTLQEICGSGRQKELLAQGVMIQRYSQVTPEQERLEKQRQLPFHMHINLELLECVYLTCSMLLEIPLLAQTGSSPDVKKRIISKTYRRMLEYHERQIFTGPPENTRDHVMQASKALAAGEWKKATDFIHSIKIWDLMPNTEGIKTMLAKQIQEEGLRTYLFTYAPFYDTLAIATLSSMFELDSRKVSAVVSKMISHEELAAALDQVTETVIFRKGVELSRLQSLALTLSDKASSLIETNERTLEQKTQGSANAFSRKDNRGGGQRGGGQRGGRGGARTGGNPQRQAGGTQFTGGALGNAVRG.

Residues 1–100 form a disordered region; the sequence is MSRFFRGGDD…KVKSAKDKRF (100 aa). Acidic residues-rich tracts occupy residues 16 to 59 and 72 to 87; these read SSEE…DEEE and SDDE…SDDE. Basic and acidic residues predominate over residues 88–100; sequence ATTKVKSAKDKRF. The region spanning 613-787 is the PCI domain; that stretch reads FHMHINLELL…ETVIFRKGVE (175 aa). The disordered stretch occupies residues 812-872; it reads TLEQKTQGSA…GGALGNAVRG (61 aa). Residues 831–848 show a composition bias toward gly residues; sequence GGGQRGGGQRGGRGGART.

Belongs to the eIF-3 subunit C family. Component of the eukaryotic translation initiation factor 3 (eIF-3) complex.

The protein resides in the cytoplasm. Its function is as follows. Component of the eukaryotic translation initiation factor 3 (eIF-3) complex, which is involved in protein synthesis of a specialized repertoire of mRNAs and, together with other initiation factors, stimulates binding of mRNA and methionyl-tRNAi to the 40S ribosome. The eIF-3 complex specifically targets and initiates translation of a subset of mRNAs involved in cell proliferation. The sequence is that of Eukaryotic translation initiation factor 3 subunit C (nip-1) from Neurospora crassa (strain ATCC 24698 / 74-OR23-1A / CBS 708.71 / DSM 1257 / FGSC 987).